Reading from the N-terminus, the 322-residue chain is NADH-cytochrome b5 reductase 2 (322 aa).

The chain crosses the membrane as a helical span at residues 32–48 (LAPIYISVGLAGLGVGL). Residues 72 to 176 (QGWVDLKLSE…KGPIPKYPWE (105 aa)) enclose the FAD-binding FR-type domain. 179–214 (KHKHICLIAGGTGITPMYQLARQIFKNPEDQTKVTL) is a binding site for FAD.

The protein belongs to the flavoprotein pyridine nucleotide cytochrome reductase family. The cofactor is FAD.

The protein resides in the mitochondrion outer membrane. It catalyses the reaction 2 Fe(III)-[cytochrome b5] + NADH = 2 Fe(II)-[cytochrome b5] + NAD(+) + H(+). May mediate the reduction of outer membrane cytochrome b5. In Aspergillus clavatus (strain ATCC 1007 / CBS 513.65 / DSM 816 / NCTC 3887 / NRRL 1 / QM 1276 / 107), this protein is NADH-cytochrome b5 reductase 2 (mcr1).